The following is a 271-amino-acid chain: Glutamate racemase (271 aa).

Substrate contacts are provided by residues 12 to 13 (DS) and 44 to 45 (YG). The active-site Proton donor/acceptor is the Cys75. 76-77 (NS) contributes to the substrate binding site. The active-site Proton donor/acceptor is the Cys185. 186–187 (TH) lines the substrate pocket.

This sequence belongs to the aspartate/glutamate racemases family.

The catalysed reaction is L-glutamate = D-glutamate. It participates in cell wall biogenesis; peptidoglycan biosynthesis. Its function is as follows. Provides the (R)-glutamate required for cell wall biosynthesis. The chain is Glutamate racemase from Mycobacterium bovis (strain ATCC BAA-935 / AF2122/97).